The primary structure comprises 254 residues: Peptide methionine sulfoxide reductase A5 (254 aa).

An N-terminal signal peptide occupies residues 1-26; the sequence is MARGSAAAAIAGVVWVLLLLVGVASG.

Belongs to the MsrA Met sulfoxide reductase family.

It catalyses the reaction L-methionyl-[protein] + [thioredoxin]-disulfide + H2O = L-methionyl-(S)-S-oxide-[protein] + [thioredoxin]-dithiol. The catalysed reaction is [thioredoxin]-disulfide + L-methionine + H2O = L-methionine (S)-S-oxide + [thioredoxin]-dithiol. Functionally, catalyzes the reduction of methionine sulfoxide (MetSO) to methionine in proteins. Plays a protective role against oxidative stress by restoring activity to proteins that have been inactivated by methionine oxidation. MSRA family specifically reduces the MetSO S-enantiomer. The chain is Peptide methionine sulfoxide reductase A5 (MSRA5) from Oryza sativa subsp. japonica (Rice).